The chain runs to 61 residues: Small ribosomal subunit protein uS14B (61 aa).

The Zn(2+) site is built by cysteine 24, cysteine 27, cysteine 40, and cysteine 43.

Belongs to the universal ribosomal protein uS14 family. Zinc-binding uS14 subfamily. In terms of assembly, part of the 30S ribosomal subunit. Contacts proteins S3 and S10. Zn(2+) serves as cofactor.

Functionally, binds 16S rRNA, required for the assembly of 30S particles and may also be responsible for determining the conformation of the 16S rRNA at the A site. The sequence is that of Small ribosomal subunit protein uS14B from Lacticaseibacillus paracasei (strain ATCC 334 / BCRC 17002 / CCUG 31169 / CIP 107868 / KCTC 3260 / NRRL B-441) (Lactobacillus paracasei).